A 229-amino-acid polypeptide reads, in one-letter code: MNHSPIIIALDFPQKEPALTCAKQLSPQHCRLKIGSELFTREGAPLIAQLRELGFEIFLDLKFHDIPNTVAAAVRVAADLGVWMVNVHASGGLAMMQAAKEAATAAKQAPLLTAVTVLTSFDDAALGSVGVDDLMESQVQRLARLAFTAGLDGVVCSAAEVPVIKKSTAPQFLTVTPGIRPQQSAHDDQKRVFTPKEALAQGSDYLVIGRPITRAADPAQALNAIMATL.

Residues Asp-11, Lys-33, 60–69 (DLKFHDIPNT), Thr-119, Arg-180, Gln-189, Gly-209, and Arg-210 each bind substrate. The active-site Proton donor is the Lys-62.

Belongs to the OMP decarboxylase family. Type 1 subfamily. As to quaternary structure, homodimer.

The catalysed reaction is orotidine 5'-phosphate + H(+) = UMP + CO2. Its pathway is pyrimidine metabolism; UMP biosynthesis via de novo pathway; UMP from orotate: step 2/2. Catalyzes the decarboxylation of orotidine 5'-monophosphate (OMP) to uridine 5'-monophosphate (UMP). In Dichelobacter nodosus (strain VCS1703A), this protein is Orotidine 5'-phosphate decarboxylase.